Here is a 110-residue protein sequence, read N- to C-terminus: UPF0122 protein LMOf2365_1829 (110 aa).

This sequence belongs to the UPF0122 family.

Its function is as follows. Might take part in the signal recognition particle (SRP) pathway. This is inferred from the conservation of its genetic proximity to ftsY/ffh. May be a regulatory protein. This chain is UPF0122 protein LMOf2365_1829, found in Listeria monocytogenes serotype 4b (strain F2365).